The sequence spans 251 residues: MILYEYPFNERIRTLLRLEDLFERFAFFLAQEDPREHHVALTTLFEIAEVTGRADLKSDLMKELERQRQTLAPFRGNPGIEQNALEAVLGEIEQTLANLAQMQGKTGQHLVDNEWLASIRSRAVIPGGTCKFDLPSYYAWQQWPAEQRRQDIAKWVAPLLPLRDAAAIVLRLARESGQASKVMAMQGSYQQMLSGRTYQLMQVRVPPELHVIPEASANKYMLWVRFTMQDGDVRPRAVDIDVPFHLTLCNL.

The protein belongs to the ZapD family. In terms of assembly, interacts with FtsZ.

Its subcellular location is the cytoplasm. Its function is as follows. Cell division factor that enhances FtsZ-ring assembly. Directly interacts with FtsZ and promotes bundling of FtsZ protofilaments, with a reduction in FtsZ GTPase activity. This chain is Cell division protein ZapD, found in Burkholderia vietnamiensis (strain G4 / LMG 22486) (Burkholderia cepacia (strain R1808)).